We begin with the raw amino-acid sequence, 246 residues long: NLP effector protein Pc118548 (246 aa).

Positions 1 to 19 (MNFRAFLLAAIAGIATINA) are cleaved as a signal peptide. The Hepta-peptide GHRHDWE motif signature appears at 122-128 (GHRHYWE). The N-linked (GlcNAc...) asparagine glycan is linked to Asn141.

Belongs to the Necrosis inducing protein (NPP1) family.

It localises to the secreted. In terms of biological role, secreted effector that contributes strongly to virulence during infection by P.capsici. Induces cell death in the Solanaceae, including Nicotiana benthamiana and hot pepper. This chain is NLP effector protein Pc118548, found in Phytophthora capsici.